A 750-amino-acid chain; its full sequence is Photosystem I P700 chlorophyll a apoprotein A1 (750 aa).

8 helical membrane passes run 70–93 (VFSA…FHGA), 156–179 (LYCT…FHYH), 195–219 (LNHH…HVSL), 291–309 (IAHH…GHMY), 346–369 (WHAQ…HHMY), 385–411 (LSLF…IFMV), 433–455 (AIIS…LYIH), and 531–549 (FLVH…LILL). [4Fe-4S] cluster is bound by residues C573 and C582. A run of 2 helical transmembrane segments spans residues 589-610 (HVFL…HFSW) and 664-686 (LSAY…MFLF). Position 675 (H675) interacts with chlorophyll a'. Chlorophyll a is bound by residues M683 and Y691. W692 is a binding site for phylloquinone. Residues 724–744 (AVGVTHYLLGGIATTWAFFLA) traverse the membrane as a helical segment.

The protein belongs to the PsaA/PsaB family. As to quaternary structure, the PsaA/B heterodimer binds the P700 chlorophyll special pair and subsequent electron acceptors. PSI consists of a core antenna complex that captures photons, and an electron transfer chain that converts photonic excitation into a charge separation. The eukaryotic PSI reaction center is composed of at least 11 subunits. Requires P700 is a chlorophyll a/chlorophyll a' dimer, A0 is one or more chlorophyll a, A1 is one or both phylloquinones and FX is a shared 4Fe-4S iron-sulfur center. as cofactor.

The protein resides in the plastid. It is found in the chloroplast thylakoid membrane. It carries out the reaction reduced [plastocyanin] + hnu + oxidized [2Fe-2S]-[ferredoxin] = oxidized [plastocyanin] + reduced [2Fe-2S]-[ferredoxin]. Functionally, psaA and PsaB bind P700, the primary electron donor of photosystem I (PSI), as well as the electron acceptors A0, A1 and FX. PSI is a plastocyanin-ferredoxin oxidoreductase, converting photonic excitation into a charge separation, which transfers an electron from the donor P700 chlorophyll pair to the spectroscopically characterized acceptors A0, A1, FX, FA and FB in turn. Oxidized P700 is reduced on the lumenal side of the thylakoid membrane by plastocyanin. The protein is Photosystem I P700 chlorophyll a apoprotein A1 of Acorus calamus (Sweet flag).